A 54-amino-acid chain; its full sequence is UPF0391 membrane protein Reut_A0124 (54 aa).

The next 2 membrane-spanning stretches (helical) occupy residues 5–25 (ALVFFVIALIAAVFGFGGIAA) and 30–50 (IAKILFFIFLIVALVTAVMGL).

It belongs to the UPF0391 family.

The protein resides in the cell membrane. In Cupriavidus pinatubonensis (strain JMP 134 / LMG 1197) (Cupriavidus necator (strain JMP 134)), this protein is UPF0391 membrane protein Reut_A0124.